A 1024-amino-acid polypeptide reads, in one-letter code: Seizure 6-like protein (1024 aa).

The first 28 residues, Met-1–Ala-28, serve as a signal peptide directing secretion. Topologically, residues Leu-29–Ala-958 are extracellular. Disordered stretches follow at residues Ala-33–Ala-77, Arg-108–Leu-184, and Ala-212–Gln-234. Ser-49 is a glycosylation site (O-linked (GalNAc...) serine). The span at Ser-56–Val-66 shows a compositional bias: basic and acidic residues. A compositionally biased stretch (basic residues) spans Lys-110 to Pro-120. Positions Ser-138–Glu-162 are enriched in polar residues. O-glycosylated at one site regions lie at residues Ser-147–Thr-161 and Ser-176–Ser-180. A disulfide bridge links Cys-281 with Cys-308. In terms of domain architecture, CUB 1 spans Cys-281 to Phe-389. N-linked (GlcNAc...) asparagine glycosylation is found at Asn-311, Asn-328, and Asn-350. A Sushi 1 domain is found at Leu-391–Ala-450. Intrachain disulfides connect Cys-393-Cys-433 and Cys-419-Cys-448. Asn-435, Asn-458, Asn-474, Asn-514, Asn-576, Asn-618, Asn-674, and Asn-742 each carry an N-linked (GlcNAc...) asparagine glycan. One can recognise a CUB 2 domain in the interval Cys-452–Phe-562. A Sushi 2 domain is found at Gly-565 to Ala-626. 2 cysteine pairs are disulfide-bonded: Cys-567–Cys-609 and Cys-594–Cys-624. The CUB 3 domain occupies Cys-628 to Val-739. 3 Sushi domains span residues Asp-743–Lys-802, Met-804–Ser-867, and Leu-871–Val-932. 6 cysteine pairs are disulfide-bonded: Cys-745–Cys-787, Cys-773–Cys-800, Cys-806–Cys-848, Cys-834–Cys-865, Cys-873–Cys-915, and Cys-901–Cys-930. A helical transmembrane segment spans residues Leu-959–Ile-979. The Cytoplasmic segment spans residues Thr-980–Ile-1024.

The protein belongs to the SEZ6 family. Post-translationally, O-glycosylated. In terms of tissue distribution, widely expressed, including adult and fetal brains and lungs. Not expressed in all lung cancer cell lines.

It localises to the endoplasmic reticulum membrane. May contribute to specialized endoplasmic reticulum functions in neurons. The chain is Seizure 6-like protein (SEZ6L) from Homo sapiens (Human).